We begin with the raw amino-acid sequence, 465 residues long: UDP-N-acetylmuramate--L-alanine ligase (465 aa).

G114–T120 is a binding site for ATP.

The protein belongs to the MurCDEF family.

It localises to the cytoplasm. It catalyses the reaction UDP-N-acetyl-alpha-D-muramate + L-alanine + ATP = UDP-N-acetyl-alpha-D-muramoyl-L-alanine + ADP + phosphate + H(+). It participates in cell wall biogenesis; peptidoglycan biosynthesis. Functionally, cell wall formation. This chain is UDP-N-acetylmuramate--L-alanine ligase, found in Chlorobium phaeobacteroides (strain BS1).